A 342-amino-acid chain; its full sequence is D-erythrose-4-phosphate dehydrogenase (342 aa).

Residue 12-13 (RI) participates in NAD(+) binding. Substrate contacts are provided by residues 154-156 (SCT), Arg200, 213-214 (TK), and Arg236. Cys155 (nucleophile) is an active-site residue. Residue Asn318 coordinates NAD(+).

This sequence belongs to the glyceraldehyde-3-phosphate dehydrogenase family. Epd subfamily. In terms of assembly, homotetramer.

The protein resides in the cytoplasm. The enzyme catalyses D-erythrose 4-phosphate + NAD(+) + H2O = 4-phospho-D-erythronate + NADH + 2 H(+). It functions in the pathway cofactor biosynthesis; pyridoxine 5'-phosphate biosynthesis; pyridoxine 5'-phosphate from D-erythrose 4-phosphate: step 1/5. Functionally, catalyzes the NAD-dependent conversion of D-erythrose 4-phosphate to 4-phosphoerythronate. In Klebsiella pneumoniae (strain 342), this protein is D-erythrose-4-phosphate dehydrogenase.